A 76-amino-acid polypeptide reads, in one-letter code: Small ribosomal subunit protein bS16 (76 aa).

Belongs to the bacterial ribosomal protein bS16 family.

The chain is Small ribosomal subunit protein bS16 from Helicobacter acinonychis (strain Sheeba).